Here is a 1101-residue protein sequence, read N- to C-terminus: Nuclear pore complex protein NUP107 (1101 aa).

Belongs to the nucleoporin Nup84/Nup107 family. In terms of assembly, part of the nuclear pore complex (NPC). The NPC has an eight-fold symmetrical structure comprising a central transport channel and two rings, the cytoplasmic and nuclear rings, to which eight filaments are attached. The cytoplasmic filaments have loose ends, while the nuclear filaments are joined in a distal ring, forming a nuclear basket. NPCs are highly dynamic in configuration and composition, and can be devided in 3 subcomplexes, the NUP62 subcomplex, the NUP107-160 subcomplex and the NUP93 subcomplex, containing approximately 30 different nucleoporin proteins.

It is found in the nucleus envelope. It localises to the nucleus. The protein resides in the nuclear pore complex. This chain is Nuclear pore complex protein NUP107, found in Arabidopsis thaliana (Mouse-ear cress).